The primary structure comprises 212 residues: HTH-type transcriptional repressor NicS (212 aa).

Residues 14-74 (DRTRDNILKA…SVLEHIYASF (61 aa)) form the HTH tetR-type domain. Residues 37-56 (RIEQISTLAKSNDRMIYYYF) constitute a DNA-binding region (H-T-H motif).

Its pathway is cofactor degradation; nicotinate degradation [regulation]. Functionally, transcriptional repressor for the nicAB operon, encoding the upper aerobic nicotinate degradation pathway. Acts under non-induced conditions: repression of the nicAB operon becomes alleviated in presence of either nicotinate or 6-hydroxynicotinate (6HNA). This chain is HTH-type transcriptional repressor NicS (nicS), found in Pseudomonas putida (strain ATCC 47054 / DSM 6125 / CFBP 8728 / NCIMB 11950 / KT2440).